An 81-amino-acid chain; its full sequence is U12-hexatoxin-Mg1a (81 aa).

The first 24 residues, 1-24 (MKAPATIVILIMSLISVLWATADT), serve as a signal peptide directing secretion. A propeptide spanning residues 25-50 (EDGNLLFPIEDFIRKFDEYPVQPKER) is cleaved from the precursor. 3 disulfide bridges follow: cysteine 52/cysteine 66, cysteine 59/cysteine 71, and cysteine 65/cysteine 75. Proline 78 carries the post-translational modification Proline amide.

Expressed by the venom gland.

It localises to the secreted. In terms of biological role, blocks voltage-gated sodium channels (Nav). Intracranial injection into mice causes lacrimation, slow breathing and death. Intrathorax injection into crickets causes death. In Macrothele gigas (Japanese funnel web spider), this protein is U12-hexatoxin-Mg1a.